Reading from the N-terminus, the 453-residue chain is Ribulose bisphosphate carboxylase large chain (453 aa).

A propeptide spanning residues 1–2 (MS) is cleaved from the precursor. Residue P3 is modified to N-acetylproline. Position 14 is an N6,N6,N6-trimethyllysine (K14). Substrate is bound by residues N123 and T173. The active-site Proton acceptor is the K175. Residue K177 coordinates substrate. Mg(2+) is bound by residues K201, D203, and E204. An N6-carboxylysine modification is found at K201. H294 acts as the Proton acceptor in catalysis. Positions 295, 327, and 379 each coordinate substrate.

The protein belongs to the RuBisCO large chain family. Type I subfamily. Heterohexadecamer of 8 large chains and 8 small chains; disulfide-linked. The disulfide link is formed within the large subunit homodimers. Requires Mg(2+) as cofactor. The disulfide bond which can form in the large chain dimeric partners within the hexadecamer appears to be associated with oxidative stress and protein turnover.

Its subcellular location is the plastid. It is found in the chloroplast. The catalysed reaction is 2 (2R)-3-phosphoglycerate + 2 H(+) = D-ribulose 1,5-bisphosphate + CO2 + H2O. It catalyses the reaction D-ribulose 1,5-bisphosphate + O2 = 2-phosphoglycolate + (2R)-3-phosphoglycerate + 2 H(+). RuBisCO catalyzes two reactions: the carboxylation of D-ribulose 1,5-bisphosphate, the primary event in carbon dioxide fixation, as well as the oxidative fragmentation of the pentose substrate in the photorespiration process. Both reactions occur simultaneously and in competition at the same active site. This Galium parisiense (Wall bedstraw) protein is Ribulose bisphosphate carboxylase large chain.